Here is a 118-residue protein sequence, read N- to C-terminus: UPF0342 protein BCG9842_B4422 (118 aa).

The protein belongs to the UPF0342 family.

This is UPF0342 protein BCG9842_B4422 from Bacillus cereus (strain G9842).